Reading from the N-terminus, the 115-residue chain is Holo-[acyl-carrier-protein] synthase (115 aa).

The Mg(2+) site is built by D6 and E51.

Belongs to the P-Pant transferase superfamily. AcpS family. Mg(2+) serves as cofactor.

The protein localises to the cytoplasm. It carries out the reaction apo-[ACP] + CoA = holo-[ACP] + adenosine 3',5'-bisphosphate + H(+). In terms of biological role, transfers the 4'-phosphopantetheine moiety from coenzyme A to a Ser of acyl-carrier-protein. In Campylobacter jejuni subsp. jejuni serotype O:2 (strain ATCC 700819 / NCTC 11168), this protein is Holo-[acyl-carrier-protein] synthase.